The sequence spans 358 residues: Peptide chain release factor 1 (358 aa).

The residue at position 237 (Gln237) is an N5-methylglutamine.

Belongs to the prokaryotic/mitochondrial release factor family. In terms of processing, methylated by PrmC. Methylation increases the termination efficiency of RF1.

The protein localises to the cytoplasm. Its function is as follows. Peptide chain release factor 1 directs the termination of translation in response to the peptide chain termination codons UAG and UAA. The polypeptide is Peptide chain release factor 1 (Streptomyces griseus subsp. griseus (strain JCM 4626 / CBS 651.72 / NBRC 13350 / KCC S-0626 / ISP 5235)).